A 260-amino-acid chain; its full sequence is Aliphatic sulfonates import ATP-binding protein SsuB 1 (260 aa).

The ABC transporter domain occupies 29-243; it reads VRVDGLTRSF…DITDPRFAEL (215 aa). 61 to 68 lines the ATP pocket; the sequence is GRSGCGKS.

Belongs to the ABC transporter superfamily. Aliphatic sulfonates importer (TC 3.A.1.17.2) family. As to quaternary structure, the complex is composed of two ATP-binding proteins (SsuB), two transmembrane proteins (SsuC) and a solute-binding protein (SsuA).

It localises to the cell membrane. It catalyses the reaction ATP + H2O + aliphatic sulfonate-[sulfonate-binding protein]Side 1 = ADP + phosphate + aliphatic sulfonateSide 2 + [sulfonate-binding protein]Side 1.. Part of the ABC transporter complex SsuABC involved in aliphatic sulfonates import. Responsible for energy coupling to the transport system. The chain is Aliphatic sulfonates import ATP-binding protein SsuB 1 from Streptomyces avermitilis (strain ATCC 31267 / DSM 46492 / JCM 5070 / NBRC 14893 / NCIMB 12804 / NRRL 8165 / MA-4680).